We begin with the raw amino-acid sequence, 675 residues long: Cysteine-rich receptor-like protein kinase 25 (675 aa).

The first 25 residues, 1 to 25, serve as a signal peptide directing secretion; the sequence is MSSCFKSSVSLFSVFLFMILKTVTS. Topologically, residues 26–281 are extracellular; it reads DPTYLYHICP…IPSEKGKGKN (256 aa). 2 Gnk2-homologous domains span residues 28 to 134 and 140 to 247; these read TYLY…NQSI and IRPG…LYPF. N-linked (GlcNAc...) asparagine glycans are attached at residues N36, N43, N77, N106, N131, N151, N161, N188, N249, and N281. The chain crosses the membrane as a helical span at residues 282–302; the sequence is LTVIVTAIAVPVSVCVLLLGA. Topologically, residues 303 to 675 are cytoplasmic; it reads MCWLLARRRN…DSSITIVYPR (373 aa). Residues 347-622 form the Protein kinase domain; it reads FSESNKLGHG…DILVMMNSFT (276 aa). ATP-binding positions include 353–361 and K375; that span reads LGHGGFGEV. Y420 is subject to Phosphotyrosine. The active-site Proton acceptor is D472. S476 is subject to Phosphoserine. T512 is modified (phosphothreonine). Y520 is modified (phosphotyrosine). The disordered stretch occupies residues 638 to 661; sequence MKDSRDPRSGGSASDHSATSKSLP. Polar residues predominate over residues 648-661; sequence GSASDHSATSKSLP.

It belongs to the protein kinase superfamily. Ser/Thr protein kinase family. CRK subfamily.

The protein localises to the membrane. It catalyses the reaction L-seryl-[protein] + ATP = O-phospho-L-seryl-[protein] + ADP + H(+). It carries out the reaction L-threonyl-[protein] + ATP = O-phospho-L-threonyl-[protein] + ADP + H(+). The polypeptide is Cysteine-rich receptor-like protein kinase 25 (CRK25) (Arabidopsis thaliana (Mouse-ear cress)).